A 504-amino-acid polypeptide reads, in one-letter code: Maturase K (504 aa).

The protein belongs to the intron maturase 2 family. MatK subfamily.

The protein localises to the plastid. Its subcellular location is the chloroplast. Usually encoded in the trnK tRNA gene intron. Probably assists in splicing its own and other chloroplast group II introns. This is Maturase K from Quercus petraea (Durmast oak).